The following is a 391-amino-acid chain: MASASFVKPNTLSSPWIGQRSFAHTSASSSPPPRVSFAIRAGAYSDELVKTAKSIASPGRGILAIDESNATCGKRLASIGLDNTEDNRQAYRQLLLTTPGLGDYISGSILFEETLYQSTKDGKTFVDCLRDANIVPGIKVDKGLSPLAGSNEESWCQGLDGLASRSAEYYKQGARFAKWRTVVSVPCGPSALAVKEAAWGLARYAAISQDNGLVPIVEPEILLDGDHPIERTLEVAEKVWSEVFFYLAQNNVMFEGILLKPSMVTPGAEHKNKASPETVADFTLTMLKRRVPPAVPGIMFLSGGQSEAEATLNLNAMNQSPNPWHVSFSYARALQNSVLRTWQGKPEKIEASQKALLVRAKANSLAQLGKYSAEGENEDAKKGMFVKGYTY.

Residues 1–40 constitute a chloroplast transit peptide; the sequence is MASASFVKPNTLSSPWIGQRSFAHTSASSSPPPRVSFAIR. Residue R88 coordinates substrate. At S150 the chain carries Phosphoserine. Residue K178 participates in substrate binding. Residue S208 is modified to Phosphoserine. Residue E218 is the Proton acceptor of the active site. K260 acts as the Schiff-base intermediate with dihydroxyacetone-P in catalysis. 302–304 contacts substrate; it reads SGG. Position 387 is an N6,N6,N6-trimethyllysine (K387).

Belongs to the class I fructose-bisphosphate aldolase family. As to quaternary structure, homotetramer. Post-translationally, can be trimethylated at Lys-387 by LSMT-L, but the trimethylation has no effect in vitro. In terms of processing, S-glutathionylated. As to expression, expressed in roots, and at low levels in rosettes leaves, cauline leaves, stems and flowers.

It is found in the plastid. The protein localises to the chloroplast. Its subcellular location is the plastoglobule. The catalysed reaction is beta-D-fructose 1,6-bisphosphate = D-glyceraldehyde 3-phosphate + dihydroxyacetone phosphate. It functions in the pathway carbohydrate degradation; glycolysis; D-glyceraldehyde 3-phosphate and glycerone phosphate from D-glucose: step 4/4. Its function is as follows. Plays a key role in glycolysis and gluconeogenesis. This chain is Fructose-bisphosphate aldolase 3, chloroplastic, found in Arabidopsis thaliana (Mouse-ear cress).